The following is a 230-amino-acid chain: Urease accessory protein UreF (230 aa).

The protein belongs to the UreF family. As to quaternary structure, ureD, UreF and UreG form a complex that acts as a GTP-hydrolysis-dependent molecular chaperone, activating the urease apoprotein by helping to assemble the nickel containing metallocenter of UreC. The UreE protein probably delivers the nickel.

The protein resides in the cytoplasm. Required for maturation of urease via the functional incorporation of the urease nickel metallocenter. This is Urease accessory protein UreF from Marinomonas sp. (strain MWYL1).